A 277-amino-acid chain; its full sequence is Co-chaperone protein DjlA (277 aa).

Residues 1–4 (MWGK) lie on the Periplasmic side of the membrane. A helical membrane pass occupies residues 5-28 (ILGAFFGFLLGGPFGLLLGLFLGH). The Cytoplasmic portion of the chain corresponds to 29 to 277 (KFDKARRNVY…DMIRKEKGFK (249 aa)). In terms of domain architecture, J spans 211–277 (DAYEVLGVTE…DMIRKEKGFK (67 aa)).

Homodimer.

The protein resides in the cell inner membrane. Its function is as follows. Regulatory DnaK co-chaperone. Direct interaction between DnaK and DjlA is needed for the induction of the wcaABCDE operon, involved in the synthesis of a colanic acid polysaccharide capsule, possibly through activation of the RcsB/RcsC phosphotransfer signaling pathway. The colanic acid capsule may help the bacterium survive conditions outside the host. The chain is Co-chaperone protein DjlA from Photobacterium profundum (strain SS9).